The chain runs to 171 residues: uncharacterized protein (171 aa).

The region spanning 30 to 97 is the HTH gntR-type domain; the sequence is AGRVSAAYHA…PKKGIIICAL (68 aa). Positions 57 to 76 form a DNA-binding region, H-T-H motif; it reads EIEIARQLGMSRTPVHEAMA.

This is an uncharacterized protein from Agrobacterium vitis (Rhizobium vitis).